The primary structure comprises 311 residues: Tyrosine recombinase XerC (311 aa).

Residues 14 to 100 (ESLNETAKKF…SLRTFYKVLL (87 aa)) enclose the Core-binding (CB) domain. One can recognise a Tyr recombinase domain in the interval 121–303 (EVPKNFRINE…SKEKIKEVYR (183 aa)). Active-site residues include Arg163, Lys187, His255, Arg258, and His281. The active-site O-(3'-phospho-DNA)-tyrosine intermediate is the Tyr290.

Belongs to the 'phage' integrase family. XerC subfamily. As to quaternary structure, forms a cyclic heterotetrameric complex composed of two molecules of XerC and two molecules of XerD.

It is found in the cytoplasm. Functionally, site-specific tyrosine recombinase, which acts by catalyzing the cutting and rejoining of the recombining DNA molecules. The XerC-XerD complex is essential to convert dimers of the bacterial chromosome into monomers to permit their segregation at cell division. It also contributes to the segregational stability of plasmids. The chain is Tyrosine recombinase XerC from Leptospira interrogans serogroup Icterohaemorrhagiae serovar copenhageni (strain Fiocruz L1-130).